The primary structure comprises 161 residues: Dihydrofolate reductase (161 aa).

A DHFR domain is found at 2-161 (NISLIAAISK…YNYSFEILSR (160 aa)). 6 to 8 (IAA) is a binding site for substrate. NADP(+) is bound by residues 7–8 (AA) and 15–20 (IGYKNK). D28 is a substrate binding site. 44–47 (GRLT) is an NADP(+) binding site. Substrate is bound at residue R59. NADP(+) contacts are provided by residues 64–66 (ISS) and 96–101 (IGGAKI). T115 contacts substrate.

It belongs to the dihydrofolate reductase family.

It carries out the reaction (6S)-5,6,7,8-tetrahydrofolate + NADP(+) = 7,8-dihydrofolate + NADPH + H(+). The protein operates within cofactor biosynthesis; tetrahydrofolate biosynthesis; 5,6,7,8-tetrahydrofolate from 7,8-dihydrofolate: step 1/1. Its function is as follows. Key enzyme in folate metabolism. Catalyzes an essential reaction for de novo glycine and purine synthesis, and for DNA precursor synthesis. The polypeptide is Dihydrofolate reductase (folA) (Buchnera aphidicola subsp. Acyrthosiphon pisum (strain APS) (Acyrthosiphon pisum symbiotic bacterium)).